The chain runs to 351 residues: MGSLERSKKKAQVWKKAVIHFSLCFVMGFFTGFAPAGKASFFSNFETTSYTSTKSPIPPQPFENATYTQHSLLNRTLINSQSQAPAPAESREAEGETRSLSEKEDENQVKVTPRGLVIVVTPIITKDRYKNVLLRRMANTLRLVPPPLLWIVVEKHSDGEEKSSSTMLRKTGIMYRRIVFKEDFTSLESELDHQRNLALRHIEHHKLSGIVHFAGLNNIYDLDFFVKIRDIEVFGTWPMALLSANRKRVVVEGPVCESSQVLGWHLRKINNETETKPPIHISSFAFNSSILWDPERWGRPSSVEGTKQDSIKYVKQVVLEDDTKLKGLPAQDCSKIMLWRLKFPTRTRLST.

Residues Met-1–Lys-16 are Cytoplasmic-facing. A helical; Signal-anchor for type II membrane protein transmembrane segment spans residues Ala-17–Ala-36. Topologically, residues Gly-37 to Thr-351 are lumenal. Asn-64 and Asn-74 each carry an N-linked (GlcNAc...) asparagine glycan. Positions Ser-80–Asn-107 are disordered. Residues Glu-89–Asn-107 are compositionally biased toward basic and acidic residues. Asn-271 and Asn-287 each carry an N-linked (GlcNAc...) asparagine glycan.

Belongs to the glycosyltransferase 43 family. As to expression, expressed in developing interfascicular fibers, primary and secondary xylem in stems and developing secondary xylem in roots.

It localises to the golgi apparatus membrane. The enzyme catalyses [(1-&gt;4)-beta-D-xylan](n) + UDP-alpha-D-xylose = [(1-&gt;4)-beta-D-xylan](n+1) + UDP + H(+). Functionally, involved in the synthesis of the hemicellulose glucuronoxylan, a major component of secondary cell walls. Xylan xylosyltransferase that acts cooperatively with IRX14 to achieve the successive addition of xylosyl residues during xylan backbone elongation. The chain is Beta-1,4-xylosyltransferase IRX9 from Arabidopsis thaliana (Mouse-ear cress).